The chain runs to 331 residues: Protein RecA (331 aa).

An ATP-binding site is contributed by 66-73; sequence GPESSGKT.

The protein belongs to the RecA family.

The protein resides in the cytoplasm. Functionally, can catalyze the hydrolysis of ATP in the presence of single-stranded DNA, the ATP-dependent uptake of single-stranded DNA by duplex DNA, and the ATP-dependent hybridization of homologous single-stranded DNAs. It interacts with LexA causing its activation and leading to its autocatalytic cleavage. This is Protein RecA from Acholeplasma laidlawii (strain PG-8A).